Here is a 388-residue protein sequence, read N- to C-terminus: MGKKAIQFGGGNIGRGFVAEFLHEAGYEVVFVDVMDAVVSALQTTPSYNVTEVSKDGENTKTISNYRAINSKTNESDAVKEIATADVVTCAVGPNILKFIAPLIAKGIDARTESKPVAVIACENAIGATDTLHGFIKEHTPKDRLDTLYDRARFANSAIDRIVPNQPPNSGLNVRIEKFYEWAVEQTPFGSFGHPDIPAIHWVDNLEPYIERKLFTVNTGHATTAYYGHLRGKKMIADALADDEIRSMVHKVLDETASLIVSKHGIPEDEQKEYVDTIIGRMSNPYLEDNIERVGRAPLRKLSRKERFIGPASQLAERGQKFDALVDAIEMALRFQNVPGDQESADLAQILKQKSSEDATSELTGLEKDHPLYSPVLERVAKVQQDTK.

5–16 serves as a coordination point for NAD(+); it reads AIQFGGGNIGRG. The active site involves Lys-213.

It belongs to the mannitol dehydrogenase family. Monomer.

It carries out the reaction D-mannitol 1-phosphate + NAD(+) = beta-D-fructose 6-phosphate + NADH + H(+). Functionally, catalyzes the NAD(H)-dependent interconversion of D-fructose 6-phosphate and D-mannitol 1-phosphate in the mannitol metabolic pathway. The polypeptide is Mannitol-1-phosphate 5-dehydrogenase (mpdA) (Aspergillus terreus (strain NIH 2624 / FGSC A1156)).